Consider the following 597-residue polypeptide: TOX high mobility group box family member 4 (597 aa).

2 disordered regions span residues 160–224 (GAIL…EPQK) and 520–546 (VQEE…SPQP). A compositionally biased stretch (basic residues) spans 207–217 (KPKTPKKKKKK). Positions 212–217 (KKKKKK) match the Nuclear localization signal motif. Positions 222–290 (PQKPLSAYAL…EYLKALALYK (69 aa)) form a DNA-binding region, HMG box.

As to quaternary structure, component of the PNUTS-PP1 phosphatase complex.

It is found in the nucleus. Its subcellular location is the chromosome. In terms of biological role, transcription factor that modulates cell fate reprogramming from the somatic state to the pluripotent and neuronal fate. Also acts as a regulatory component of protein phosphatase 1 (PP1) complexes. Component of the PNUTS-PP1 protein phosphatase complex, a PP1 complex that regulates RNA polymerase II transcription pause-release. PNUTS-PP1 also plays a role in the control of chromatin structure and cell cycle progression during the transition from mitosis into interphase. This Xenopus tropicalis (Western clawed frog) protein is TOX high mobility group box family member 4 (tox4).